Consider the following 198-residue polypeptide: Chromophore lyase CpcT/CpeT 3 (198 aa).

This sequence belongs to the CpcT/CpeT biliprotein lyase family.

In terms of biological role, covalently attaches a chromophore to Cys residue(s) of phycobiliproteins. The chain is Chromophore lyase CpcT/CpeT 3 from Synechococcus sp. (strain JA-3-3Ab) (Cyanobacteria bacterium Yellowstone A-Prime).